A 473-amino-acid polypeptide reads, in one-letter code: Bifunctional protein HldE (473 aa).

Positions 1-318 (MKLSMPRFDQ…RAIQREEGSE (318 aa)) are ribokinase. 194–197 (NLSE) contributes to the ATP binding site. D263 is an active-site residue. The tract at residues 343–473 (FTNGCFDILH…TAIVEKIRKN (131 aa)) is cytidylyltransferase.

In the N-terminal section; belongs to the carbohydrate kinase PfkB family. It in the C-terminal section; belongs to the cytidylyltransferase family. Homodimer.

It catalyses the reaction D-glycero-beta-D-manno-heptose 7-phosphate + ATP = D-glycero-beta-D-manno-heptose 1,7-bisphosphate + ADP + H(+). The catalysed reaction is D-glycero-beta-D-manno-heptose 1-phosphate + ATP + H(+) = ADP-D-glycero-beta-D-manno-heptose + diphosphate. It participates in nucleotide-sugar biosynthesis; ADP-L-glycero-beta-D-manno-heptose biosynthesis; ADP-L-glycero-beta-D-manno-heptose from D-glycero-beta-D-manno-heptose 7-phosphate: step 1/4. It functions in the pathway nucleotide-sugar biosynthesis; ADP-L-glycero-beta-D-manno-heptose biosynthesis; ADP-L-glycero-beta-D-manno-heptose from D-glycero-beta-D-manno-heptose 7-phosphate: step 3/4. Catalyzes the phosphorylation of D-glycero-D-manno-heptose 7-phosphate at the C-1 position to selectively form D-glycero-beta-D-manno-heptose-1,7-bisphosphate. Its function is as follows. Catalyzes the ADP transfer from ATP to D-glycero-beta-D-manno-heptose 1-phosphate, yielding ADP-D-glycero-beta-D-manno-heptose. This is Bifunctional protein HldE from Pseudomonas putida (strain GB-1).